The following is a 426-amino-acid chain: Dynein regulatory complex protein 10 (426 aa).

Disordered regions lie at residues 18-37 (TRIGPKTDPSKRPADPLKPL) and 399-426 (SKKKRGKGKAKGKEKGKQKGKEKGKGKK). Residues 377-406 (MVRAATLIQAFWKGYLVRSLLRSKKKRGKG) enclose the IQ domain. Basic residues predominate over residues 399-408 (SKKKRGKGKA). A compositionally biased stretch (basic and acidic residues) spans 409-426 (KGKEKGKQKGKEKGKGKK).

Belongs to the DRC10 family. Component of the nexin-dynein regulatory complex (N-DRC). Interacts with CFAP52.

The protein resides in the cytoplasm. It is found in the cytoskeleton. The protein localises to the flagellum axoneme. In terms of biological role, component of the nexin-dynein regulatory complex (N-DRC), a key regulator of ciliary/flagellar motility which maintains the alignment and integrity of the distal axoneme and regulates microtubule sliding in motile axonemes. The chain is Dynein regulatory complex protein 10 (IQCD) from Macaca fascicularis (Crab-eating macaque).